The sequence spans 161 residues: MAGILRLVVQWPPGRLQTVTKGVESLICTDWIRHKFTRSRIPEKVFQASPEDHEKYGGDPQNPHKLHIVTRIKSTRRRPYWEKDIIKMLGLEKAHTPQVHKNIPSVNAKLKVVKHLIRIKPLKLPQGLPAEENMSNTCLKSTGELVVQWHLKPVEQKAHES.

Residues 1 to 34 (MAGILRLVVQWPPGRLQTVTKGVESLICTDWIRH) constitute a mitochondrion transit peptide.

The protein belongs to the universal ribosomal protein uL30 family. Component of the mitochondrial large ribosomal subunit (mt-LSU). Mature mammalian 55S mitochondrial ribosomes consist of a small (28S) and a large (39S) subunit. The 28S small subunit contains a 12S ribosomal RNA (12S mt-rRNA) and 30 different proteins. The 39S large subunit contains a 16S rRNA (16S mt-rRNA), a copy of mitochondrial valine transfer RNA (mt-tRNA(Val)), which plays an integral structural role, and 52 different proteins.

The protein resides in the mitochondrion. The sequence is that of Large ribosomal subunit protein uL30m (MRPL30) from Homo sapiens (Human).